The chain runs to 147 residues: Small ribosomal subunit protein uS12 (147 aa).

This sequence belongs to the universal ribosomal protein uS12 family. As to quaternary structure, part of the 30S ribosomal subunit.

With S4 and S5 plays an important role in translational accuracy. Located at the interface of the 30S and 50S subunits. The chain is Small ribosomal subunit protein uS12 from Thermococcus kodakarensis (strain ATCC BAA-918 / JCM 12380 / KOD1) (Pyrococcus kodakaraensis (strain KOD1)).